The chain runs to 92 residues: Acylphosphatase (92 aa).

Residues 5 to 90 (TWRLVAHGRV…GEFAGFEFRP (86 aa)) enclose the Acylphosphatase-like domain. Residues Arg-20 and Asn-38 contribute to the active site.

The protein belongs to the acylphosphatase family.

The enzyme catalyses an acyl phosphate + H2O = a carboxylate + phosphate + H(+). The protein is Acylphosphatase (acyP) of Cupriavidus necator (strain ATCC 17699 / DSM 428 / KCTC 22496 / NCIMB 10442 / H16 / Stanier 337) (Ralstonia eutropha).